The sequence spans 317 residues: tRNA dimethylallyltransferase (317 aa).

Residue 14 to 21 (GPTASGKT) coordinates ATP. 16–21 (TASGKT) contacts substrate. Interaction with substrate tRNA regions lie at residues 39–42 (DSAL) and 163–167 (QRIQR).

This sequence belongs to the IPP transferase family. In terms of assembly, monomer. It depends on Mg(2+) as a cofactor.

It catalyses the reaction adenosine(37) in tRNA + dimethylallyl diphosphate = N(6)-dimethylallyladenosine(37) in tRNA + diphosphate. Catalyzes the transfer of a dimethylallyl group onto the adenine at position 37 in tRNAs that read codons beginning with uridine, leading to the formation of N6-(dimethylallyl)adenosine (i(6)A). The sequence is that of tRNA dimethylallyltransferase from Stenotrophomonas maltophilia (strain R551-3).